We begin with the raw amino-acid sequence, 132 residues long: Small ribosomal subunit protein uS8 (132 aa).

It belongs to the universal ribosomal protein uS8 family. Part of the 30S ribosomal subunit. Contacts proteins S5 and S12.

One of the primary rRNA binding proteins, it binds directly to 16S rRNA central domain where it helps coordinate assembly of the platform of the 30S subunit. The chain is Small ribosomal subunit protein uS8 from Geotalea uraniireducens (strain Rf4) (Geobacter uraniireducens).